A 513-amino-acid chain; its full sequence is ATP synthase subunit alpha (513 aa).

An ATP-binding site is contributed by 169 to 176 (GDRQTGKT).

The protein belongs to the ATPase alpha/beta chains family. In terms of assembly, F-type ATPases have 2 components, CF(1) - the catalytic core - and CF(0) - the membrane proton channel. CF(1) has five subunits: alpha(3), beta(3), gamma(1), delta(1), epsilon(1). CF(0) has three main subunits: a(1), b(2) and c(9-12). The alpha and beta chains form an alternating ring which encloses part of the gamma chain. CF(1) is attached to CF(0) by a central stalk formed by the gamma and epsilon chains, while a peripheral stalk is formed by the delta and b chains.

The protein localises to the cell inner membrane. It carries out the reaction ATP + H2O + 4 H(+)(in) = ADP + phosphate + 5 H(+)(out). Its function is as follows. Produces ATP from ADP in the presence of a proton gradient across the membrane. The alpha chain is a regulatory subunit. In Glaesserella parasuis serovar 5 (strain SH0165) (Haemophilus parasuis), this protein is ATP synthase subunit alpha.